The following is a 568-amino-acid chain: CTP synthase (568 aa).

An amidoligase domain region spans residues 1–276; it reads MPQARTIKHV…DAYLVRRLGL (276 aa). Ser-18 serves as a coordination point for CTP. Residue Ser-18 participates in UTP binding. ATP-binding positions include 19–24 and Asp-76; that span reads SLGKGL. Mg(2+) contacts are provided by Asp-76 and Glu-150. Residues 157-159, 197-202, and Lys-233 contribute to the CTP site; these read DIE and KTKPTQ. Residues 197–202 and Lys-233 each bind UTP; that span reads KTKPTQ. The region spanning 301-550 is the Glutamine amidotransferase type-1 domain; the sequence is RIALVGKYVD…VNAALEYRAA (250 aa). L-glutamine is bound at residue Gly-364. Catalysis depends on Cys-391, which acts as the Nucleophile; for glutamine hydrolysis. Residues 392-395, Glu-415, and Arg-476 contribute to the L-glutamine site; that span reads LGLQ. Catalysis depends on residues His-523 and Glu-525.

Belongs to the CTP synthase family. In terms of assembly, homotetramer.

The catalysed reaction is UTP + L-glutamine + ATP + H2O = CTP + L-glutamate + ADP + phosphate + 2 H(+). It carries out the reaction L-glutamine + H2O = L-glutamate + NH4(+). The enzyme catalyses UTP + NH4(+) + ATP = CTP + ADP + phosphate + 2 H(+). It functions in the pathway pyrimidine metabolism; CTP biosynthesis via de novo pathway; CTP from UDP: step 2/2. Allosterically activated by GTP, when glutamine is the substrate; GTP has no effect on the reaction when ammonia is the substrate. The allosteric effector GTP functions by stabilizing the protein conformation that binds the tetrahedral intermediate(s) formed during glutamine hydrolysis. Inhibited by the product CTP, via allosteric rather than competitive inhibition. Its function is as follows. Catalyzes the ATP-dependent amination of UTP to CTP with either L-glutamine or ammonia as the source of nitrogen. Regulates intracellular CTP levels through interactions with the four ribonucleotide triphosphates. The sequence is that of CTP synthase from Saccharopolyspora erythraea (strain ATCC 11635 / DSM 40517 / JCM 4748 / NBRC 13426 / NCIMB 8594 / NRRL 2338).